Here is a 330-residue protein sequence, read N- to C-terminus: MTTAIRQAEGEEALDHFQVGSYSPYLFFSSEEWARFRADTPLTLTLDEVHRLRSIDDPIDLAEVRRIYLALSRLLSSHVESSQLLFEQRNRFLSTNVTKTPFIIGIAGSVAVGKSTTARVLKELLARWPSSPKVDLVTTDGFLYSNATLVRDNKLNRKGFPESYDTAALLRFLSAIKAGQQNVKAPRYSHLTYDVLPDQHTIIDRPDILIFEGINVLQSRDLPRDGKIVPMVSDFFDFSIYIDAEESLIHNWYVKRFMKLRQTAFRDPNSYFHRYATISEDEASTIAENLWSHINLINLRDNIQPTRPRADLILRKGENHLVEQVALRKL.

Position 108 to 115 (108 to 115 (GSVAVGKS)) interacts with ATP.

Belongs to the prokaryotic pantothenate kinase family.

The protein localises to the cytoplasm. It catalyses the reaction (R)-pantothenate + ATP = (R)-4'-phosphopantothenate + ADP + H(+). Its pathway is cofactor biosynthesis; coenzyme A biosynthesis; CoA from (R)-pantothenate: step 1/5. This chain is Pantothenate kinase, found in Allorhizobium ampelinum (strain ATCC BAA-846 / DSM 112012 / S4) (Agrobacterium vitis (strain S4)).